A 273-amino-acid polypeptide reads, in one-letter code: Formamidopyrimidine-DNA glycosylase (273 aa).

Pro2 (schiff-base intermediate with DNA) is an active-site residue. The active-site Proton donor is the Glu3. Lys57 (proton donor; for beta-elimination activity) is an active-site residue. Positions 91, 110, and 151 each coordinate DNA. The FPG-type zinc-finger motif lies at 236 to 270; it reads QVYGRKDEACNDCGTIIEAKVIGQRNSYFCPHCQM. Catalysis depends on Arg260, which acts as the Proton donor; for delta-elimination activity.

This sequence belongs to the FPG family. As to quaternary structure, monomer. Requires Zn(2+) as cofactor.

It catalyses the reaction Hydrolysis of DNA containing ring-opened 7-methylguanine residues, releasing 2,6-diamino-4-hydroxy-5-(N-methyl)formamidopyrimidine.. The enzyme catalyses 2'-deoxyribonucleotide-(2'-deoxyribose 5'-phosphate)-2'-deoxyribonucleotide-DNA = a 3'-end 2'-deoxyribonucleotide-(2,3-dehydro-2,3-deoxyribose 5'-phosphate)-DNA + a 5'-end 5'-phospho-2'-deoxyribonucleoside-DNA + H(+). Its function is as follows. Involved in base excision repair of DNA damaged by oxidation or by mutagenic agents. Acts as a DNA glycosylase that recognizes and removes damaged bases. Has a preference for oxidized purines, such as 7,8-dihydro-8-oxoguanine (8-oxoG). Has AP (apurinic/apyrimidinic) lyase activity and introduces nicks in the DNA strand. Cleaves the DNA backbone by beta-delta elimination to generate a single-strand break at the site of the removed base with both 3'- and 5'-phosphates. This is Formamidopyrimidine-DNA glycosylase from Actinobacillus pleuropneumoniae serotype 5b (strain L20).